The sequence spans 229 residues: Enolase-phosphatase E1 (229 aa).

It belongs to the HAD-like hydrolase superfamily. MasA/MtnC family. As to quaternary structure, monomer. Mg(2+) is required as a cofactor.

It carries out the reaction 5-methylsulfanyl-2,3-dioxopentyl phosphate + H2O = 1,2-dihydroxy-5-(methylsulfanyl)pent-1-en-3-one + phosphate. It functions in the pathway amino-acid biosynthesis; L-methionine biosynthesis via salvage pathway; L-methionine from S-methyl-5-thio-alpha-D-ribose 1-phosphate: step 3/6. It participates in amino-acid biosynthesis; L-methionine biosynthesis via salvage pathway; L-methionine from S-methyl-5-thio-alpha-D-ribose 1-phosphate: step 4/6. Its function is as follows. Bifunctional enzyme that catalyzes the enolization of 2,3-diketo-5-methylthiopentyl-1-phosphate (DK-MTP-1-P) into the intermediate 2-hydroxy-3-keto-5-methylthiopentenyl-1-phosphate (HK-MTPenyl-1-P), which is then dephosphorylated to form the acireductone 1,2-dihydroxy-3-keto-5-methylthiopentene (DHK-MTPene). This is Enolase-phosphatase E1 from Pectobacterium atrosepticum (strain SCRI 1043 / ATCC BAA-672) (Erwinia carotovora subsp. atroseptica).